The chain runs to 194 residues: Segregation and condensation protein B (194 aa).

This sequence belongs to the ScpB family. As to quaternary structure, homodimer. Homodimerization may be required to stabilize the binding of ScpA to the Smc head domains. Component of a cohesin-like complex composed of ScpA, ScpB and the Smc homodimer, in which ScpA and ScpB bind to the head domain of Smc. The presence of the three proteins is required for the association of the complex with DNA.

It is found in the cytoplasm. Functionally, participates in chromosomal partition during cell division. May act via the formation of a condensin-like complex containing Smc and ScpA that pull DNA away from mid-cell into both cell halves. This is Segregation and condensation protein B from Streptococcus agalactiae serotype Ia (strain ATCC 27591 / A909 / CDC SS700).